The sequence spans 157 residues: Regenerating islet-derived protein 4 (157 aa).

Positions Met1 to Ser22 are cleaved as a signal peptide. A disulfide bridge connects residues Cys29 and Cys40. Positions Tyr36–Lys154 constitute a C-type lectin domain. Residues Asn49 and Asn62 are each glycosylated (N-linked (GlcNAc...) asparagine). Intrachain disulfides connect Cys57-Cys153 and Cys128-Cys145. A carbohydrate is bound by residues Asp97 to Gln102 and Lys134 to Lys136.

It localises to the secreted. Functionally, calcium-independent lectin displaying mannose-binding specificity and able to maintain carbohydrate recognition activity in an acidic environment. May be involved in inflammatory and metaplastic responses of the gastrointestinal epithelium. The protein is Regenerating islet-derived protein 4 (Reg4) of Mus musculus (Mouse).